The primary structure comprises 153 residues: MKTFVLHIFIFALVAFASASRDSAKKIGSQYDNYATCLAEHSLTEDDIFSIGEVSSGQHKTNHEDTELHKNGCVMQCLLEKDGLMSGADYDEEKIREDYIKETGAQPGDQRIEALNACMQETKDMEDKCDKSLLLVACVLAAEAVLADSNEGA.

A signal peptide spans 1–19; that stretch reads MKTFVLHIFIFALVAFASA. Disulfide bonds link cysteine 37–cysteine 77, cysteine 73–cysteine 129, and cysteine 118–cysteine 138.

It belongs to the PBP/GOBP family. As to quaternary structure, homodimer.

The protein localises to the secreted. In terms of biological role, colony queen number, a major feature of social organization, is associated with worker genotype for Gp-9. Colonies are headed by either a single reproductive queen (monogyne form) or multiple queens (polygyne form). Differences in worker Gp-9 genotypes between social forms may cause differences in workers' abilities to recognize queens and regulate their numbers. The chain is Pheromone-binding protein Gp-9 from Solenopsis sp. (strain B0-153) (Fire ant).